We begin with the raw amino-acid sequence, 218 residues long: MDKSESTSAGRNRRRRPRRGSRSAPSSADANFRVLSQQLSRLNKTLAAGRPTINHPTFVGSERCKPGYTFTSITLKPPKIDRGSYYGKRLLLPDSVTEYDKKLVSRIQIRVNPLRKFDSTVWVTVRKVPASSDLSVAAISAMFADGASPVLVYQYAASGVQANNKLLYDLSAMRADIGDMRKYAVLVYSKDDALETDELVLHVDVEHQRIPTSGVLPV.

Met1 bears the N-acetylmethionine; by host mark. The disordered stretch occupies residues Met1–Ala28. The segment covering Arg11–Ser21 has biased composition (basic residues).

It belongs to the cucumovirus capsid protein family.

It localises to the virion. Capsid protein. Probably binds RNA and plays a role in packaging. This chain is Capsid protein, found in Cucumis sativus (Cucumber).